We begin with the raw amino-acid sequence, 105 residues long: uncharacterized protein (105 aa).

Residue S2 is modified to N-acetylserine.

This is an uncharacterized protein from Saccharomyces cerevisiae (strain ATCC 204508 / S288c) (Baker's yeast).